Consider the following 350-residue polypeptide: Nicotinate-nucleotide--dimethylbenzimidazole phosphoribosyltransferase (350 aa).

The active-site Proton acceptor is the Glu317.

The protein belongs to the CobT family.

The enzyme catalyses 5,6-dimethylbenzimidazole + nicotinate beta-D-ribonucleotide = alpha-ribazole 5'-phosphate + nicotinate + H(+). Its pathway is nucleoside biosynthesis; alpha-ribazole biosynthesis; alpha-ribazole from 5,6-dimethylbenzimidazole: step 1/2. Catalyzes the synthesis of alpha-ribazole-5'-phosphate from nicotinate mononucleotide (NAMN) and 5,6-dimethylbenzimidazole (DMB). The polypeptide is Nicotinate-nucleotide--dimethylbenzimidazole phosphoribosyltransferase (Shewanella sp. (strain MR-7)).